An 882-amino-acid polypeptide reads, in one-letter code: Valine--tRNA ligase (882 aa).

The 'HIGH' region motif lies at 45 to 55; it reads PNVTGSLHIGH. A 'KMSKS' region motif is present at residues 525–529; the sequence is KFSKS. K528 lines the ATP pocket. A coiled-coil region spans residues 812-881; the sequence is EGLIDVAKEK…VLKKGIQNLA (70 aa).

This sequence belongs to the class-I aminoacyl-tRNA synthetase family. ValS type 1 subfamily. As to quaternary structure, monomer.

It localises to the cytoplasm. The enzyme catalyses tRNA(Val) + L-valine + ATP = L-valyl-tRNA(Val) + AMP + diphosphate. Its function is as follows. Catalyzes the attachment of valine to tRNA(Val). As ValRS can inadvertently accommodate and process structurally similar amino acids such as threonine, to avoid such errors, it has a 'posttransfer' editing activity that hydrolyzes mischarged Thr-tRNA(Val) in a tRNA-dependent manner. This chain is Valine--tRNA ligase, found in Leptospira interrogans serogroup Icterohaemorrhagiae serovar Lai (strain 56601).